The sequence spans 156 residues: Small ribosomal subunit protein uS7 (156 aa).

It belongs to the universal ribosomal protein uS7 family. Part of the 30S ribosomal subunit. Contacts proteins S9 and S11.

Its function is as follows. One of the primary rRNA binding proteins, it binds directly to 16S rRNA where it nucleates assembly of the head domain of the 30S subunit. Is located at the subunit interface close to the decoding center, probably blocks exit of the E-site tRNA. This is Small ribosomal subunit protein uS7 from Limosilactobacillus reuteri (strain DSM 20016) (Lactobacillus reuteri).